The sequence spans 86 residues: MKSIVFVALFGLALLAVVCSASEGAHKELLKEVVRAMVVDKTDAVQAEERECRWYLGGCSQDGDCCKHLQRHSNYEWCIWDGTFSK.

Residues 1–21 (MKSIVFVALFGLALLAVVCSA) form the signal peptide. A propeptide spanning residues 22–50 (SEGAHKELLKEVVRAMVVDKTDAVQAEER) is cleaved from the precursor. 2 disulfide bridges follow: cysteine 52–cysteine 66 and cysteine 65–cysteine 78.

This sequence belongs to the neurotoxin 10 (Hwtx-1) family. 17 (Hntx-9) subfamily. As to expression, expressed by the venom gland.

The protein resides in the secreted. Its function is as follows. Ion channel inhibitor. The polypeptide is Omega-theraphotoxin-Hhn1e (Cyriopagopus hainanus (Chinese bird spider)).